The chain runs to 460 residues: Histidinol dehydrogenase (460 aa).

Residues Ser269, Gln291, and His294 each coordinate substrate. Residues Gln291 and His294 each coordinate Zn(2+). Catalysis depends on proton acceptor residues Glu358 and His359. Residues His359, Asp392, Glu446, and His451 each coordinate substrate. Residue Asp392 participates in Zn(2+) binding. A Zn(2+)-binding site is contributed by His451.

This sequence belongs to the histidinol dehydrogenase family. It depends on Zn(2+) as a cofactor.

The catalysed reaction is L-histidinol + 2 NAD(+) + H2O = L-histidine + 2 NADH + 3 H(+). The protein operates within amino-acid biosynthesis; L-histidine biosynthesis; L-histidine from 5-phospho-alpha-D-ribose 1-diphosphate: step 9/9. Catalyzes the sequential NAD-dependent oxidations of L-histidinol to L-histidinaldehyde and then to L-histidine. The chain is Histidinol dehydrogenase from Rhodopirellula baltica (strain DSM 10527 / NCIMB 13988 / SH1).